We begin with the raw amino-acid sequence, 361 residues long: DNA replication and repair protein RecF (361 aa).

An ATP-binding site is contributed by 30 to 37 (GQNAQGKT).

This sequence belongs to the RecF family.

The protein resides in the cytoplasm. Functionally, the RecF protein is involved in DNA metabolism; it is required for DNA replication and normal SOS inducibility. RecF binds preferentially to single-stranded, linear DNA. It also seems to bind ATP. This Streptococcus gordonii (strain Challis / ATCC 35105 / BCRC 15272 / CH1 / DL1 / V288) protein is DNA replication and repair protein RecF.